Here is a 319-residue protein sequence, read N- to C-terminus: Fiber protein (319 aa).

2 Shaft repeats span residues 44–73 (GVLS…TVDT) and 82–103 (IKVN…GNGL).

The protein belongs to the adenoviridae fiber family. In terms of assembly, homotrimer. Interacts with host receptor CD46. Interacts (via N-terminal tail region) with pentons.

The protein localises to the virion. Its subcellular location is the host nucleus. Forms spikes that protrude from each vertex of the icosahedral capsid. Interacts with host receptor CD46 to provide virion initial attachment to target cell. Fiber proteins are shed during virus entry, when virus is still at the cell surface. Heparan sulfate might also play a role in virus binding. The sequence is that of Fiber protein from Homo sapiens (Human).